We begin with the raw amino-acid sequence, 176 residues long: Ribosome maturation factor RimM (176 aa).

Positions 99–173 constitute a PRC barrel domain; that stretch reads KEGEFHLVDL…WLLIKPPPGL (75 aa).

This sequence belongs to the RimM family. In terms of assembly, binds ribosomal protein uS19.

The protein localises to the cytoplasm. Functionally, an accessory protein needed during the final step in the assembly of 30S ribosomal subunit, possibly for assembly of the head region. Essential for efficient processing of 16S rRNA. May be needed both before and after RbfA during the maturation of 16S rRNA. It has affinity for free ribosomal 30S subunits but not for 70S ribosomes. The polypeptide is Ribosome maturation factor RimM (Prochlorococcus marinus (strain MIT 9211)).